We begin with the raw amino-acid sequence, 585 residues long: Conglutin alpha 3 (585 aa).

Positions 1–23 are cleaved as a signal peptide; the sequence is MANPFLLSLSLCLVLLYTSACLG. Intrachain disulfides connect Cys-32–Cys-65 and Cys-108–Cys-406. A Cupin type-1 1 domain is found at 37-258; that stretch reads LNALEPDNRI…ALNIDEDTVH (222 aa). Disordered stretches follow at residues 113–147, 199–240, and 283–402; these read EEAQQSQSRQERRRGQRSQSQEQEDSHQKIRHFRE, EEYP…ILSG, and KWQE…NGLE. Positions 136–147 are enriched in basic and acidic residues; it reads EDSHQKIRHFRE. The span at 211 to 224 shows a compositional bias: basic residues; that stretch reads RQQHQRPSGRRHGQ. Acidic residues predominate over residues 309–320; sequence REEEEKEEEDEP. Positions 338-350 are enriched in basic and acidic residues; it reads ERGRGRGGSEWKR. A Cupin type-1 2 domain is found at 412-558; sequence ENIADPTRAD…AFRLSLNQVS (147 aa). The span at 565 to 579 shows a compositional bias: polar residues; that stretch reads NHNPLVTPQSQSQDH. The disordered stretch occupies residues 565–585; sequence NHNPLVTPQSQSQDHNLVKVA.

Belongs to the 11S seed storage protein (globulins) family. As to quaternary structure, hexamer; each subunit is composed of an acidic and a basic chain derived from a single precursor and linked by a disulfide bond. Component of globulins complexes which accumulate in seeds.

Functionally, sulfur-rich seed storage protein. This protein found in the seeds of many leguminous and non-leguminous plants is the source of sulfur-containing amino acids in seed meals. This Lupinus angustifolius (Narrow-leaved blue lupine) protein is Conglutin alpha 3.